Reading from the N-terminus, the 367-residue chain is Germination protease (367 aa).

A propeptide spanning residues 1-13 (MEEQQIPFQVRTD) is cleaved from the precursor. The segment at 267–287 (KDDPSKSLTPAGMSFGNRKLT) is disordered.

The protein belongs to the peptidase A25 family. Homotetramer. Autoproteolytically processed. The inactive tetrameric zymogen termed p46 autoprocesses to a smaller form termed p41, which is active only during spore germination.

The catalysed reaction is Endopeptidase action with P4 Glu or Asp, P1 preferably Glu &gt; Asp, P1' hydrophobic and P2' Ala.. Functionally, initiates the rapid degradation of small, acid-soluble proteins during spore germination. In Oceanobacillus iheyensis (strain DSM 14371 / CIP 107618 / JCM 11309 / KCTC 3954 / HTE831), this protein is Germination protease.